Here is a 536-residue protein sequence, read N- to C-terminus: uncharacterized protein (536 aa).

The segment at 71–98 (LFVIVKSGCSCPSGRICRHMLAVFLYVY) adopts an SWIM-type zinc-finger fold. Residues 482 to 528 (YKEAARYLKKLRTLYKKAKKQKVWERYIQLLSSHYKRLRALQEELQK) adopt a coiled-coil conformation.

This is an uncharacterized protein from Bacillus subtilis (strain 168).